Here is a 504-residue protein sequence, read N- to C-terminus: ATP synthase subunit alpha (504 aa).

ATP is bound at residue 169–176 (GDRKTGKT).

Belongs to the ATPase alpha/beta chains family. F-type ATPases have 2 components, CF(1) - the catalytic core - and CF(0) - the membrane proton channel. CF(1) has five subunits: alpha(3), beta(3), gamma(1), delta(1), epsilon(1). CF(0) has three main subunits: a(1), b(2) and c(9-12). The alpha and beta chains form an alternating ring which encloses part of the gamma chain. CF(1) is attached to CF(0) by a central stalk formed by the gamma and epsilon chains, while a peripheral stalk is formed by the delta and b chains.

Its subcellular location is the cell membrane. It catalyses the reaction ATP + H2O + 4 H(+)(in) = ADP + phosphate + 5 H(+)(out). Its function is as follows. Produces ATP from ADP in the presence of a proton gradient across the membrane. The alpha chain is a regulatory subunit. The sequence is that of ATP synthase subunit alpha from Lactiplantibacillus plantarum (strain ATCC BAA-793 / NCIMB 8826 / WCFS1) (Lactobacillus plantarum).